The sequence spans 311 residues: Manganese-dependent ADP-ribose/CDP-alcohol diphosphatase (311 aa).

Residues D17, Q19, D64, N99, H218, H255, and H257 each coordinate Zn(2+).

It belongs to the ADPRibase-Mn family. Monomer. Mg(2+) serves as cofactor.

It catalyses the reaction CDP-choline + H2O = phosphocholine + CMP + 2 H(+). The enzyme catalyses ADP-D-ribose + H2O = D-ribose 5-phosphate + AMP + 2 H(+). It carries out the reaction CDP-glycerol + H2O = sn-glycerol 3-phosphate + CMP + 2 H(+). In terms of biological role, hydrolyzes ADP-ribose, IDP-ribose, CDP-glycerol, CDP-choline and CDP-ethanolamine, but not other non-reducing ADP-sugars or CDP-glucose. The polypeptide is Manganese-dependent ADP-ribose/CDP-alcohol diphosphatase (Arabidopsis thaliana (Mouse-ear cress)).